An 871-amino-acid polypeptide reads, in one-letter code: MKNLIGITLILIITILGIGFSTYYTTVFYGVPVWKEAQPTLFCASDADITSRDKHNIWATHNCVPLDPNPYEVTLANVSIRFNMEENYMVQEMKEDILSLFQQSFKPCVKLTPFCIKMTCTMTNTTNKTLNSATTTLTPTVNLSSIPNYEVYNCSFNQTTEFRDKKKQIYSLFYREDIVKEDGNNNSYYLHNCNTSVITQECDKSTFEPIPIRYCAPAGFALLKCRDQNFTGKGQCSNVSVVHCTHGIYPMIATALHLNGSLEEEETKAYFVNTSVNTPLLVKFNVSINLTCERTGNNTRGQVQIGPGMTFYNIENVVGDTRKAYCSVNATTWYRNLDWAMAAINTTMRARNETVQQTFQWQRDGDPEVTSFWFNCQGEFFYCNLTNWTNTWTANRTNNTHGTLVAPCRLRQIVNHWGIVSKGVYLPPRRGTVKCHSNITGLIMTAEKDNNNSYTPQFSAVVEDYWKVELARYKVVEIQPLSVAPRPGKRPEIKANHTRSRRDVGIGLLFLGFLSAAGSTMGAASIALTAQARGLLSGIVQQQQNLLQAIEAQQHLLQLSVWGIKQLQARMLAVEKYIRDQQLLSLWGCANKLVCHSSVPWNLTWAEDSTKCNHSDAKYYDCIWNNLTWQEWDRLVENSTGTIYSLLEKAQTQQEKNKQELLELDKWSSLWDWFDITQWLWYIKIAIIIVAGLVGLRILMFIVNVVKQVRQGYTPLFSQIPTQAEQDPEQPGGIAGGGGGRDNIRWTPSPAGFFSIVWEDLRNLLIWIYQTFQNFIWILWISLQALKQGIISLAHSLVIVHRTIIVGVRQIIEWSSNTYASLRVLLIQAIDRLANFTGWWTDLIIEGVVYIARGIRNIPRRIRQGLELALN.

A signal peptide spans 1 to 21 (MKNLIGITLILIITILGIGFS). Topologically, residues 22 to 684 (TYYTTVFYGV…DITQWLWYIK (663 aa)) are extracellular. C43 and C63 are disulfide-bonded. Residues N77, N124, N127, N142, N153, N157, N185, N194, N229, N238, N259, N273, N285, N289, N297, N329, N345, N352, N384, N387, N395, N398, N438, N451, and N496 are each glycosylated (N-linked (GlcNAc...) asparagine; by host). 5 disulfides stabilise this stretch: C108-C202, C115-C193, C120-C154, C215-C244, and C225-C236. The segment at 120–153 (CTMTNTTNKTLNSATTTLTPTVNLSSIPNYEVYN) is V1. The segment at 154-193 (CSFNQTTEFRDKKKQIYSLFYREDIVKEDGNNNSYYLHNC) is V2. The V3 stretch occupies residues 292 to 325 (CERTGNNTRGQVQIGPGMTFYNIENVVGDTRKAY). C292 and C326 are joined by a disulfide. 2 disulfide bridges follow: C376-C435 and C383-C408. The tract at residues 383 to 408 (CNLTNWTNTWTANRTNNTHGTLVAPC) is V4. The segment at 451 to 458 (NNSYTPQF) is V5. A fusion peptide region spans residues 502–522 (RDVGIGLLFLGFLSAAGSTMG). Residues 567-583 (LQARMLAVEKYIRDQQL) form an immunosuppression region. Residues N602, N613, N626, and N638 are each glycosylated (N-linked (GlcNAc...) asparagine; by host). A coiled-coil region spans residues 645-668 (SLLEKAQTQQEKNKQELLELDKWS). An MPER; binding to GalCer region spans residues 663–684 (ELDKWSSLWDWFDITQWLWYIK). Residues 685 to 705 (IAIIIVAGLVGLRILMFIVNV) form a helical membrane-spanning segment. The Cytoplasmic portion of the chain corresponds to 706 to 871 (VKQVRQGYTP…IRQGLELALN (166 aa)). A YXXL motif; contains endocytosis signal motif is present at residues 713–716 (YTPL).

As to quaternary structure, the mature envelope protein (Env) consists of a homotrimer of non-covalently associated gp120-gp41 heterodimers. The resulting complex protrudes from the virus surface as a spike. Interacts with host CD4 and CCR5. Gp120 also interacts with the C-type lectins CD209/DC-SIGN and CLEC4M/DC-SIGNR (collectively referred to as DC-SIGN(R)). In terms of assembly, the mature envelope protein (Env) consists of a homotrimer of non-covalently associated gp120-gp41 heterodimers. The resulting complex protrudes from the virus surface as a spike. In terms of processing, specific enzymatic cleavages in vivo yield mature proteins. Envelope glycoproteins are synthesized as an inactive precursor that is heavily N-glycosylated and processed likely by host cell furin in the Golgi to yield the mature SU and TM proteins. The cleavage site between SU and TM requires the minimal sequence [KR]-X-[KR]-R.

The protein localises to the virion membrane. It is found in the host cell membrane. It localises to the host endosome membrane. Functionally, the surface protein gp120 (SU) attaches the virus to the host lymphoid cell by binding to the primary receptor CD4. This interaction induces a structural rearrangement creating a high affinity binding site for a chemokine coreceptor like CCR5. This peculiar 2 stage receptor-interaction strategy allows gp120 to maintain the highly conserved coreceptor-binding site in a cryptic conformation, protected from neutralizing antibodies. These changes are transmitted to the transmembrane protein gp41 and are thought to activate its fusogenic potential by unmasking its fusion peptide. In terms of biological role, surface protein gp120 (SU) may target the virus to gut-associated lymphoid tissue (GALT) by binding host ITGA4/ITGB7 (alpha-4/beta-7 integrins), a complex that mediates T-cell migration to the GALT. Interaction between gp120 and ITGA4/ITGB7 would allow the virus to enter GALT early in the infection, infecting and killing most of GALT's resting CD4+ T-cells. This T-cell depletion is believed to be the major insult to the host immune system leading to AIDS. Its function is as follows. The surface protein gp120 is a ligand for CD209/DC-SIGN and CLEC4M/DC-SIGNR, which are respectively found on dendritic cells (DCs), and on endothelial cells of liver sinusoids and lymph node sinuses. These interactions allow capture of viral particles at mucosal surfaces by these cells and subsequent transmission to permissive cells. DCs are professional antigen presenting cells, critical for host immunity by inducing specific immune responses against a broad variety of pathogens. They act as sentinels in various tissues where they take up antigen, process it, and present it to T-cells following migration to lymphoid organs. SIV subverts the migration properties of dendritic cells to gain access to CD4+ T-cells in lymph nodes. Virus transmission to permissive T-cells occurs either in trans (without DCs infection, through viral capture and transmission), or in cis (following DCs productive infection, through the usual CD4-gp120 interaction), thereby inducing a robust infection. In trans infection, bound virions remain infectious over days and it is proposed that they are not degraded, but protected in non-lysosomal acidic organelles within the DCs close to the cell membrane thus contributing to the viral infectious potential during DCs' migration from the periphery to the lymphoid tissues. On arrival at lymphoid tissues, intact virions recycle back to DCs' cell surface allowing virus transmission to CD4+ T-cells. Virion capture also seems to lead to MHC-II-restricted viral antigen presentation, and probably to the activation of SIV-specific CD4+ cells. The transmembrane protein gp41 (TM) acts as a class I viral fusion protein. Under the current model, the protein has at least 3 conformational states: pre-fusion native state, pre-hairpin intermediate state, and post-fusion hairpin state. During fusion of viral and target intracellular membranes, the coiled coil regions (heptad repeats) assume a trimer-of-hairpins structure, positioning the fusion peptide in close proximity to the C-terminal region of the ectodomain. The formation of this structure appears to drive apposition and subsequent fusion of viral and target cell membranes. Complete fusion occurs in host cell endosomes. The virus undergoes clathrin-dependent internalization long before endosomal fusion, thus minimizing the surface exposure of conserved viral epitopes during fusion and reducing the efficacy of inhibitors targeting these epitopes. Membranes fusion leads to delivery of the nucleocapsid into the cytoplasm. Functionally, the envelope glycoprotein gp160 precursor down-modulates cell surface CD4 antigen by interacting with it in the endoplasmic reticulum and blocking its transport to the cell surface. In terms of biological role, the gp120-gp41 heterodimer allows rapid transcytosis of the virus through CD4 negative cells such as simple epithelial monolayers of the intestinal, rectal and endocervical epithelial barriers. Both gp120 and gp41 specifically recognize glycosphingolipids galactosyl-ceramide (GalCer) or 3' sulfo-galactosyl-ceramide (GalS) present in the lipid rafts structures of epithelial cells. Binding to these alternative receptors allows the rapid transcytosis of the virus through the epithelial cells. This transcytotic vesicle-mediated transport of virions from the apical side to the basolateral side of the epithelial cells does not involve infection of the cells themselves. The chain is Envelope glycoprotein gp160 from Simian immunodeficiency virus (isolate TAN1) (SIV-cpz).